The primary structure comprises 164 residues: Endoribonuclease YbeY (164 aa).

Residues His-124, His-128, and His-134 each contribute to the Zn(2+) site.

It belongs to the endoribonuclease YbeY family. It depends on Zn(2+) as a cofactor.

It localises to the cytoplasm. Single strand-specific metallo-endoribonuclease involved in late-stage 70S ribosome quality control and in maturation of the 3' terminus of the 16S rRNA. The sequence is that of Endoribonuclease YbeY from Nitrosomonas europaea (strain ATCC 19718 / CIP 103999 / KCTC 2705 / NBRC 14298).